The following is a 376-amino-acid chain: Probable allantoicase (376 aa).

This sequence belongs to the allantoicase family.

The catalysed reaction is allantoate + H2O = (S)-ureidoglycolate + urea. Its pathway is nitrogen metabolism; (S)-allantoin degradation; (S)-ureidoglycolate from allantoate (aminidohydrolase route): step 1/1. This chain is Probable allantoicase, found in Streptomyces coelicolor (strain ATCC BAA-471 / A3(2) / M145).